The following is a 427-amino-acid chain: Adenylosuccinate synthetase (427 aa).

GTP is bound by residues 12–18 (GDEGKGK) and 40–42 (GHT). D13 serves as the catalytic Proton acceptor. 2 residues coordinate Mg(2+): D13 and G40. Residues 13–16 (DEGK), 38–41 (NAGH), T128, R142, Q223, T238, and R302 contribute to the IMP site. H41 serves as the catalytic Proton donor. 298–304 (VTTGRAR) serves as a coordination point for substrate. Residues R304, 330-332 (KLD), and 412-414 (GVG) each bind GTP.

Belongs to the adenylosuccinate synthetase family. In terms of assembly, homodimer. It depends on Mg(2+) as a cofactor.

Its subcellular location is the cytoplasm. The catalysed reaction is IMP + L-aspartate + GTP = N(6)-(1,2-dicarboxyethyl)-AMP + GDP + phosphate + 2 H(+). Its pathway is purine metabolism; AMP biosynthesis via de novo pathway; AMP from IMP: step 1/2. Functionally, plays an important role in the de novo pathway of purine nucleotide biosynthesis. Catalyzes the first committed step in the biosynthesis of AMP from IMP. The protein is Adenylosuccinate synthetase of Parafrankia sp. (strain EAN1pec).